Here is a 166-residue protein sequence, read N- to C-terminus: MSKVIETKQQVVTEIADKLRASKSTIVVDYRGLTVSEATELRKQLREAGVEFKVYKNSLTRRAAESAEMAELNEFLTGPNAIAFSNEDVVAPAKVLNDFAKDHEALEIKAGVIEGKLVTLDEVKAIATLPSREGLLSMLLSVLQAPIRNLALATKAVADQKEEQGA.

Belongs to the universal ribosomal protein uL10 family. In terms of assembly, part of the ribosomal stalk of the 50S ribosomal subunit. The N-terminus interacts with L11 and the large rRNA to form the base of the stalk. The C-terminus forms an elongated spine to which L12 dimers bind in a sequential fashion forming a multimeric L10(L12)X complex.

Forms part of the ribosomal stalk, playing a central role in the interaction of the ribosome with GTP-bound translation factors. This Bacillus cereus (strain 03BB102) protein is Large ribosomal subunit protein uL10.